Reading from the N-terminus, the 470-residue chain is V-type proton ATPase subunit S1 (470 aa).

Residues methionine 1–alanine 41 form the signal peptide. Residues glutamate 42–arginine 231 constitute a propeptide that is removed on maturation. Residues glutamate 42–alanine 419 lie on the Lumenal side of the membrane. 7 N-linked (GlcNAc...) asparagine glycosylation sites follow: asparagine 170, asparagine 261, asparagine 273, asparagine 296, asparagine 303, asparagine 350, and asparagine 357. Cysteine 371 and cysteine 418 are disulfide-bonded. Residues serine 420–phenylalanine 440 form a helical membrane-spanning segment. Residues threonine 441–valine 470 lie on the Cytoplasmic side of the membrane. Position 465 is a phosphoserine (serine 465).

Belongs to the vacuolar ATPase subunit S1 family. In terms of assembly, accessory component of the multisubunit proton-transporting vacuolar (V)-ATPase protein pump. Interacts (via N-terminus) with ATP6AP2 (via N-terminus). Interacts with RNASEK. Interacts with TMEM106B (via C-terminus). Post-translationally, N-glycosylated. In terms of tissue distribution, widely expressed, with highest levels in brain and lowest in liver and duodenum.

It is found in the endoplasmic reticulum membrane. Its subcellular location is the endoplasmic reticulum-Golgi intermediate compartment membrane. The protein resides in the cytoplasmic vesicle. The protein localises to the secretory vesicle. It localises to the synaptic vesicle membrane. It is found in the clathrin-coated vesicle membrane. Accessory subunit of the proton-transporting vacuolar (V)-ATPase protein pump, which is required for luminal acidification of secretory vesicles. Guides the V-type ATPase into specialized subcellular compartments, such as neuroendocrine regulated secretory vesicles or the ruffled border of the osteoclast, thereby regulating its activity. Involved in membrane trafficking and Ca(2+)-dependent membrane fusion. May play a role in the assembly of the V-type ATPase complex. In aerobic conditions, involved in intracellular iron homeostasis, thus triggering the activity of Fe(2+) prolyl hydroxylase (PHD) enzymes, and leading to HIF1A hydroxylation and subsequent proteasomal degradation. In islets of Langerhans cells, may regulate the acidification of dense-core secretory granules. The polypeptide is V-type proton ATPase subunit S1 (ATP6AP1) (Homo sapiens (Human)).